The following is a 147-amino-acid chain: MANSSARPAFLVMTALALLLLLCVGPGGISGNKLKLLLRKREAPAPTMTPVAVQESRAKEFLSSLRRPKRQLWDRSRPEVQQWYQHFLYLGFDEAKFEDDISYWLNRNRNGHDYYDYYQRHYDEDSAIGPRSAHSFRHGASVNYDDY.

An N-terminal signal peptide occupies residues 1-31 (MANSSARPAFLVMTALALLLLLCVGPGGISG). Propeptides lie at residues 32–68 (NKLKLLLRKREAPAPTMTPVAVQESRAKEFLSSLRRP) and 132–147 (SAHSFRHGASVNYDDY).

It belongs to the augurin family.

Its subcellular location is the secreted. The protein localises to the cytoplasm. It is found in the apical cell membrane. Its function is as follows. Probable hormone that may attenuate cell proliferation and induce senescence of oligodendrocyte and neural precursor cells in the central nervous system. ECRG4-induced senescence is characterized by G1 arrest, RB1 dephosphorylation and accelerated CCND1 and CCND3 proteasomal degradation. The chain is Augurin from Bos taurus (Bovine).